The following is a 100-amino-acid chain: Urease subunit gamma (100 aa).

Belongs to the urease gamma subunit family. In terms of assembly, heterotrimer of UreA (gamma), UreB (beta) and UreC (alpha) subunits. Three heterotrimers associate to form the active enzyme.

The protein resides in the cytoplasm. It carries out the reaction urea + 2 H2O + H(+) = hydrogencarbonate + 2 NH4(+). The protein operates within nitrogen metabolism; urea degradation; CO(2) and NH(3) from urea (urease route): step 1/1. In Sinorhizobium fredii (strain NBRC 101917 / NGR234), this protein is Urease subunit gamma.